Here is a 769-residue protein sequence, read N- to C-terminus: 4-hydroxybenzoyl-CoA reductase subunit alpha (769 aa).

Residues glutamine 214, 244–245, 522–526, 650–655, and 722–725 contribute to the Mo-molybdopterin cytosine dinucleotide site; these read GF, SSRVT, VGKALN, and KEAS.

It belongs to the xanthine dehydrogenase family. Heterohexamer of two alpha, two beta and two gamma subunits. Mo-molybdopterin cytosine dinucleotide is required as a cofactor. The N-terminus is blocked.

The catalysed reaction is oxidized 2[4Fe-4S]-[ferredoxin] + benzoyl-CoA + H2O = 4-hydroxybenzoyl-CoA + reduced 2[4Fe-4S]-[ferredoxin] + 2 H(+). Its activity is regulated as follows. Inactivated by low concentrations of cyanide in vitro. Functionally, component of a complex that catalyzes the reductive dehydroxylation of 4-hydroxybenzoyl-CoA to benzoyl-CoA. Reaction is not reversible. Is a key enzyme in the anaerobic degradation of phenolic compounds. The polypeptide is 4-hydroxybenzoyl-CoA reductase subunit alpha (hcrA) (Thauera aromatica).